The chain runs to 104 residues: Phosphoribosyl-ATP pyrophosphatase (104 aa).

It belongs to the PRA-PH family.

It localises to the cytoplasm. It catalyses the reaction 1-(5-phospho-beta-D-ribosyl)-ATP + H2O = 1-(5-phospho-beta-D-ribosyl)-5'-AMP + diphosphate + H(+). The protein operates within amino-acid biosynthesis; L-histidine biosynthesis; L-histidine from 5-phospho-alpha-D-ribose 1-diphosphate: step 2/9. The polypeptide is Phosphoribosyl-ATP pyrophosphatase (Rhizobium rhizogenes (strain K84 / ATCC BAA-868) (Agrobacterium radiobacter)).